Reading from the N-terminus, the 65-residue chain is Large ribosomal subunit protein bL35 (65 aa).

This sequence belongs to the bacterial ribosomal protein bL35 family.

The chain is Large ribosomal subunit protein bL35 from Thermotoga petrophila (strain ATCC BAA-488 / DSM 13995 / JCM 10881 / RKU-1).